The following is a 441-amino-acid chain: Amino-acid acetyltransferase (441 aa).

The 140-residue stretch at 295 to 434 (EQIRRANIND…QALYNYQRRS (140 aa)) folds into the N-acetyltransferase domain.

Belongs to the acetyltransferase family. ArgA subfamily. Homohexamer.

The protein localises to the cytoplasm. The catalysed reaction is L-glutamate + acetyl-CoA = N-acetyl-L-glutamate + CoA + H(+). It participates in amino-acid biosynthesis; L-arginine biosynthesis; N(2)-acetyl-L-ornithine from L-glutamate: step 1/4. In Edwardsiella ictaluri (strain 93-146), this protein is Amino-acid acetyltransferase.